The sequence spans 91 residues: ATP synthase subunit c 2 (91 aa).

A run of 2 helical transmembrane segments spans residues 4-24 and 53-73; these read FSMC…GTGI and IGLA…LIIL.

This sequence belongs to the ATPase C chain family. As to quaternary structure, F-type ATPases have 2 components, F(1) - the catalytic core - and F(0) - the membrane proton channel. F(1) has five subunits: alpha(3), beta(3), gamma(1), delta(1), epsilon(1). F(0) has three main subunits: a(1), b(2) and c(10-14). The alpha and beta chains form an alternating ring which encloses part of the gamma chain. F(1) is attached to F(0) by a central stalk formed by the gamma and epsilon chains, while a peripheral stalk is formed by the delta and b chains.

The protein resides in the cell inner membrane. Functionally, f(1)F(0) ATP synthase produces ATP from ADP in the presence of a proton or sodium gradient. F-type ATPases consist of two structural domains, F(1) containing the extramembraneous catalytic core and F(0) containing the membrane proton channel, linked together by a central stalk and a peripheral stalk. During catalysis, ATP synthesis in the catalytic domain of F(1) is coupled via a rotary mechanism of the central stalk subunits to proton translocation. Its function is as follows. Key component of the F(0) channel; it plays a direct role in translocation across the membrane. A homomeric c-ring of between 10-14 subunits forms the central stalk rotor element with the F(1) delta and epsilon subunits. The polypeptide is ATP synthase subunit c 2 (Pelobacter propionicus (strain DSM 2379 / NBRC 103807 / OttBd1)).